The sequence spans 131 residues: Ribosome-binding factor A (131 aa).

This sequence belongs to the RbfA family. Monomer. Binds 30S ribosomal subunits, but not 50S ribosomal subunits or 70S ribosomes.

The protein resides in the cytoplasm. Functionally, one of several proteins that assist in the late maturation steps of the functional core of the 30S ribosomal subunit. Associates with free 30S ribosomal subunits (but not with 30S subunits that are part of 70S ribosomes or polysomes). Required for efficient processing of 16S rRNA. May interact with the 5'-terminal helix region of 16S rRNA. The chain is Ribosome-binding factor A from Christiangramia forsetii (strain DSM 17595 / CGMCC 1.15422 / KT0803) (Gramella forsetii).